Consider the following 392-residue polypeptide: Chorismate synthase (392 aa).

NADP(+) contacts are provided by Arg-40 and Arg-46. Residues 135-137 (RAS), 256-257 (QA), Gly-300, 315-319 (KPIAT), and Arg-341 contribute to the FMN site.

It belongs to the chorismate synthase family. In terms of assembly, homotetramer. The cofactor is FMNH2.

The catalysed reaction is 5-O-(1-carboxyvinyl)-3-phosphoshikimate = chorismate + phosphate. The protein operates within metabolic intermediate biosynthesis; chorismate biosynthesis; chorismate from D-erythrose 4-phosphate and phosphoenolpyruvate: step 7/7. Functionally, catalyzes the anti-1,4-elimination of the C-3 phosphate and the C-6 proR hydrogen from 5-enolpyruvylshikimate-3-phosphate (EPSP) to yield chorismate, which is the branch point compound that serves as the starting substrate for the three terminal pathways of aromatic amino acid biosynthesis. This reaction introduces a second double bond into the aromatic ring system. The polypeptide is Chorismate synthase (Nocardioides sp. (strain ATCC BAA-499 / JS614)).